The following is a 407-amino-acid chain: Imidazolonepropionase (407 aa).

Residues H74 and H76 each coordinate Fe(3+). The Zn(2+) site is built by H74 and H76. 3 residues coordinate 4-imidazolone-5-propanoate: R83, Y146, and H179. Residue Y146 participates in N-formimidoyl-L-glutamate binding. Residue H244 coordinates Fe(3+). H244 lines the Zn(2+) pocket. Q247 is a 4-imidazolone-5-propanoate binding site. D319 contacts Fe(3+). Residue D319 coordinates Zn(2+). 2 residues coordinate N-formimidoyl-L-glutamate: N321 and G323. T324 is a binding site for 4-imidazolone-5-propanoate.

Belongs to the metallo-dependent hydrolases superfamily. HutI family. Requires Zn(2+) as cofactor. The cofactor is Fe(3+).

It is found in the cytoplasm. The catalysed reaction is 4-imidazolone-5-propanoate + H2O = N-formimidoyl-L-glutamate. It functions in the pathway amino-acid degradation; L-histidine degradation into L-glutamate; N-formimidoyl-L-glutamate from L-histidine: step 3/3. Catalyzes the hydrolytic cleavage of the carbon-nitrogen bond in imidazolone-5-propanoate to yield N-formimidoyl-L-glutamate. It is the third step in the universal histidine degradation pathway. This chain is Imidazolonepropionase, found in Salmonella paratyphi C (strain RKS4594).